Here is a 248-residue protein sequence, read N- to C-terminus: Leucyl/phenylalanyl-tRNA--protein transferase (248 aa).

This sequence belongs to the L/F-transferase family.

It localises to the cytoplasm. It catalyses the reaction N-terminal L-lysyl-[protein] + L-leucyl-tRNA(Leu) = N-terminal L-leucyl-L-lysyl-[protein] + tRNA(Leu) + H(+). The enzyme catalyses N-terminal L-arginyl-[protein] + L-leucyl-tRNA(Leu) = N-terminal L-leucyl-L-arginyl-[protein] + tRNA(Leu) + H(+). The catalysed reaction is L-phenylalanyl-tRNA(Phe) + an N-terminal L-alpha-aminoacyl-[protein] = an N-terminal L-phenylalanyl-L-alpha-aminoacyl-[protein] + tRNA(Phe). Its function is as follows. Functions in the N-end rule pathway of protein degradation where it conjugates Leu, Phe and, less efficiently, Met from aminoacyl-tRNAs to the N-termini of proteins containing an N-terminal arginine or lysine. The protein is Leucyl/phenylalanyl-tRNA--protein transferase of Oleidesulfovibrio alaskensis (strain ATCC BAA-1058 / DSM 17464 / G20) (Desulfovibrio alaskensis).